The following is a 313-amino-acid chain: tRNA dimethylallyltransferase (313 aa).

ATP is bound at residue Gly-12–Ser-19. Thr-14 to Ser-19 is a binding site for substrate. Interaction with substrate tRNA regions lie at residues Asp-37–Gln-40 and Gln-161–Arg-165.

It belongs to the IPP transferase family. In terms of assembly, monomer. Mg(2+) serves as cofactor.

The enzyme catalyses adenosine(37) in tRNA + dimethylallyl diphosphate = N(6)-dimethylallyladenosine(37) in tRNA + diphosphate. Functionally, catalyzes the transfer of a dimethylallyl group onto the adenine at position 37 in tRNAs that read codons beginning with uridine, leading to the formation of N6-(dimethylallyl)adenosine (i(6)A). The polypeptide is tRNA dimethylallyltransferase (Pelagibacter ubique (strain HTCC1062)).